We begin with the raw amino-acid sequence, 317 residues long: Acetyl-coenzyme A carboxylase carboxyl transferase subunit alpha (317 aa).

Residues 38–292 (TLEERLARLE…DNIIKQSLVE (255 aa)) form the CoA carboxyltransferase C-terminal domain.

This sequence belongs to the AccA family. In terms of assembly, acetyl-CoA carboxylase is a heterohexamer composed of biotin carboxyl carrier protein (AccB), biotin carboxylase (AccC) and two subunits each of ACCase subunit alpha (AccA) and ACCase subunit beta (AccD).

The protein localises to the cytoplasm. The catalysed reaction is N(6)-carboxybiotinyl-L-lysyl-[protein] + acetyl-CoA = N(6)-biotinyl-L-lysyl-[protein] + malonyl-CoA. The protein operates within lipid metabolism; malonyl-CoA biosynthesis; malonyl-CoA from acetyl-CoA: step 1/1. Functionally, component of the acetyl coenzyme A carboxylase (ACC) complex. First, biotin carboxylase catalyzes the carboxylation of biotin on its carrier protein (BCCP) and then the CO(2) group is transferred by the carboxyltransferase to acetyl-CoA to form malonyl-CoA. The polypeptide is Acetyl-coenzyme A carboxylase carboxyl transferase subunit alpha (Oceanobacillus iheyensis (strain DSM 14371 / CIP 107618 / JCM 11309 / KCTC 3954 / HTE831)).